Reading from the N-terminus, the 179-residue chain is FADH(2)-dependent resorcinol hydroxylase, reductase component (179 aa).

This sequence belongs to the non-flavoprotein flavin reductase family. The FADH(2)-dependent resorcinol hydroxylase is composed of two subunits, GraA (the oxygenase component) and GraD (the reductase component). Both subunits are required for activity.

It catalyses the reaction FADH2 + NAD(+) = FAD + NADH + 2 H(+). Its pathway is aromatic compound metabolism. Functionally, involved in the gamma-resorcylate (2,6-dihydroxybenzoate) catabolism. Reductase component of the resorcinol hydroxylase, which catalyzes the FADPH-dependent conversion of resorcinol to hydroxyquinol. Catalyzes the reduction of FAD by NADH. The reduced flavin is then transferred to the oxygenase component GraA. The chain is FADH(2)-dependent resorcinol hydroxylase, reductase component from Rhizobium sp. (strain MTP-10005).